The primary structure comprises 190 residues: Large ribosomal subunit protein bL25 (190 aa).

This sequence belongs to the bacterial ribosomal protein bL25 family. CTC subfamily. In terms of assembly, part of the 50S ribosomal subunit; part of the 5S rRNA/L5/L18/L25 subcomplex. Contacts the 5S rRNA. Binds to the 5S rRNA independently of L5 and L18.

This is one of the proteins that binds to the 5S RNA in the ribosome where it forms part of the central protuberance. This is Large ribosomal subunit protein bL25 from Neisseria gonorrhoeae (strain ATCC 700825 / FA 1090).